A 153-amino-acid chain; its full sequence is Pheromone-binding protein Gp-9 (153 aa).

The first 19 residues, 1 to 19 (MKTFVLHIFIFALVAFASA), serve as a signal peptide directing secretion. Disulfide bonds link Cys-37/Cys-77, Cys-73/Cys-129, and Cys-118/Cys-138.

The protein belongs to the PBP/GOBP family. In terms of assembly, homodimer.

The protein localises to the secreted. Functionally, colony queen number, a major feature of social organization, is associated with worker genotype for Gp-9. Colonies are headed by either a single reproductive queen (monogyne form) or multiple queens (polygyne form). Differences in worker Gp-9 genotypes between social forms may cause differences in workers' abilities to recognize queens and regulate their numbers. The protein is Pheromone-binding protein Gp-9 of Solenopsis tridens (Fire ant).